The sequence spans 397 residues: Acetate kinase (397 aa).

A Mg(2+)-binding site is contributed by Asn9. Lys16 is an ATP binding site. Arg87 contacts substrate. Asp144 acts as the Proton donor/acceptor in catalysis. ATP contacts are provided by residues 204 to 208, 279 to 281, and 327 to 331; these read HLGNG, DCR, and GIGEN. Glu381 is a binding site for Mg(2+).

Belongs to the acetokinase family. Homodimer. Mg(2+) is required as a cofactor. Requires Mn(2+) as cofactor.

It is found in the cytoplasm. The catalysed reaction is acetate + ATP = acetyl phosphate + ADP. Its pathway is metabolic intermediate biosynthesis; acetyl-CoA biosynthesis; acetyl-CoA from acetate: step 1/2. Its function is as follows. Catalyzes the formation of acetyl phosphate from acetate and ATP. Can also catalyze the reverse reaction. The sequence is that of Acetate kinase from Chromobacterium violaceum (strain ATCC 12472 / DSM 30191 / JCM 1249 / CCUG 213 / NBRC 12614 / NCIMB 9131 / NCTC 9757 / MK).